Reading from the N-terminus, the 504-residue chain is Anaerobic nitric oxide reductase transcription regulator NorR (504 aa).

Position 57 is a 4-aspartylphosphate (Asp-57). The 230-residue stretch at 187 to 416 (MIGLSPGMTQ…LEHAIHRAVV (230 aa)) folds into the Sigma-54 factor interaction domain. ATP-binding positions include 215-222 (GETGTGKE) and 278-287 (ADNGTLFLDE). Residues 479–498 (WAACARMLETDVANLHRLAK) constitute a DNA-binding region (H-T-H motif).

Its pathway is nitrogen metabolism; nitric oxide reduction. Functionally, required for the expression of anaerobic nitric oxide (NO) reductase, acts as a transcriptional activator for at least the norVW operon. Activation also requires sigma-54. The chain is Anaerobic nitric oxide reductase transcription regulator NorR from Shigella flexneri serotype 5b (strain 8401).